Reading from the N-terminus, the 1390-residue chain is General transcriptional corepressor trfA (1390 aa).

Residues 53 to 143 form a disordered region; it reads QQQQQHQQHQ…QQQQQQQQQQ (91 aa). TPR repeat units follow at residues 171-204, 206-238, 239-272, 275-308, 312-345, 349-382, 384-419, 420-453, 454-487, and 489-521; these read ESIW…NPFS, KALT…ESKN, GEVW…LPNP, PNLW…DNKF, TEIY…PPLP, SDIW…NATH, KVLQ…DSSD, AQTW…DGRN, PTFW…NPFL, and EVWY…DPHN. Disordered stretches follow at residues 539–596, 632–938, and 958–1390; these read PIGK…NSFV, ERGR…YNNI, and LDEE…KLER. Basic and acidic residues predominate over residues 540 to 557; it reads IGKDGYDLQNGEHGEHGG. Residues 582–593 show a composition bias toward low complexity; the sequence is QNNRNGNNNGNN. The span at 632 to 641 shows a compositional bias: basic and acidic residues; the sequence is ERGRGEDMHN. The span at 644–744 shows a compositional bias: low complexity; it reads HSQYSNSMSM…MNDNVNSKNN (101 aa). A compositionally biased stretch (basic and acidic residues) spans 745-803; sequence DVLDRRYKGILEREKTSPNGDGRDNRDNIRDNRDNRDSRDGRDNRDGRDSRDRIQEYTR. The segment covering 805 to 846 has biased composition (low complexity); that stretch reads YNNNNNNNNSISSINNNNNNNNNNYNNNNNNNNNNNNNNNNN. A compositionally biased stretch (basic and acidic residues) spans 857–871; that stretch reads HNDRRSYERDNKERI. Low complexity-rich tracts occupy residues 872 to 898 and 917 to 937; these read NNNN…NNNN and NNSN…NYNN. 4 stretches are compositionally biased toward basic and acidic residues: residues 977–993, 1000–1029, 1037–1099, and 1120–1135; these read KEAE…KERS, EKPD…EKES, KEIE…EKES, and TKKD…EKKL. The segment covering 1136–1146 has biased composition (polar residues); it reads SSVSPTTTAVE. Residues 1147–1169 show a composition bias toward basic and acidic residues; that stretch reads QSRDETKELEMDTKEDSEKEKKS. Composition is skewed to low complexity over residues 1170 to 1180 and 1192 to 1203; these read STTTTAAASES and TTTTTTTTNTTT. Positions 1206 to 1218 are enriched in basic and acidic residues; sequence PTHKDKESSKNDD. Residues 1219–1228 show a composition bias toward low complexity; that stretch reads TTTTTTTTTT. The segment covering 1229–1239 has biased composition (polar residues); it reads KSAKSPNSSPT. Over residues 1240–1263 the composition is skewed to basic and acidic residues; it reads RSDEVVEPHQDASQEEINKRKLED. Low complexity-rich tracts occupy residues 1277-1289 and 1315-1337; these read STPS…STPS and SSSS…TNSS. Residues 1339–1374 show a composition bias toward basic and acidic residues; it reads KNERDRDRERERERERDREREREREREREREREKNK.

It belongs to the CYC8/SSN6 family. Associates with tupA to form the trfA-tupA corepressor complex.

The protein localises to the nucleus. Its function is as follows. Acts as a component of the trfA-tupA corepressor complex which is involved in the repression of many genes in a wide variety of physiological processes. May also be involved in the derepression of at least some target genes. The complex is recruited to target genes by interaction with DNA-bound transcriptional repressors. The complex recruits histone deacetylases to produce a repressive chromatin structure, interacts with hypoacetylated N-terminal tails of histones H3 and H4 that have been programmed for repression by the action of histone deacetylases and interferes directly with the transcriptional machinery by associating with the RNA polymerase II mediator complex. Required for normal growth and for aggregation in early development. Required for a proper chemotactic response to cAMP. This chain is General transcriptional corepressor trfA (trfA), found in Dictyostelium discoideum (Social amoeba).